The sequence spans 556 residues: Olefin beta-lactone synthetase (556 aa).

ATP is bound by residues 187–195, 321–326, Asp-430, and Arg-445; these read TSGSTGVPK and TPYGAT.

This sequence belongs to the ATP-dependent AMP-binding enzyme family. Monomer. Forms a complex with OleB and OleD.

It is found in the cytoplasm. The enzyme catalyses a (2R,3S)-2-alkyl-3-hydroxyalkanoate + ATP = a cis-3-alkyl-4-alkyloxetan-2-one + AMP + diphosphate. Its function is as follows. Involved in olefin biosynthesis. Catalyzes the conversion of 2-alkyl-3-hydroxyalkanoic acids to beta-lactones in the presence of ATP. The chain is Olefin beta-lactone synthetase from Xanthomonas campestris pv. campestris (strain ATCC 33913 / DSM 3586 / NCPPB 528 / LMG 568 / P 25).